Here is a 373-residue protein sequence, read N- to C-terminus: 4-hydroxy-3-methylbut-2-en-1-yl diphosphate synthase (flavodoxin) (373 aa).

4 residues coordinate [4Fe-4S] cluster: cysteine 270, cysteine 273, cysteine 305, and glutamate 312.

Belongs to the IspG family. Requires [4Fe-4S] cluster as cofactor.

It catalyses the reaction (2E)-4-hydroxy-3-methylbut-2-enyl diphosphate + oxidized [flavodoxin] + H2O + 2 H(+) = 2-C-methyl-D-erythritol 2,4-cyclic diphosphate + reduced [flavodoxin]. It functions in the pathway isoprenoid biosynthesis; isopentenyl diphosphate biosynthesis via DXP pathway; isopentenyl diphosphate from 1-deoxy-D-xylulose 5-phosphate: step 5/6. In terms of biological role, converts 2C-methyl-D-erythritol 2,4-cyclodiphosphate (ME-2,4cPP) into 1-hydroxy-2-methyl-2-(E)-butenyl 4-diphosphate. This chain is 4-hydroxy-3-methylbut-2-en-1-yl diphosphate synthase (flavodoxin), found in Pectobacterium atrosepticum (strain SCRI 1043 / ATCC BAA-672) (Erwinia carotovora subsp. atroseptica).